The primary structure comprises 193 residues: Ion-translocating oxidoreductase complex subunit A (193 aa).

6 helical membrane-spanning segments follow: residues 5–25, 39–59, 72–92, 102–122, 134–154, and 170–190; these read LLLLISTVLVNNFVLVKFLGL, VGMGLATTFVLTLTSAFAYLV, LSTLAFILVIAVVVQFTEMVI, ILGIYLPLITTNCIVLGLALL, VVYGFGGGLGFMLVLILFASL, and IAIGMVTAGLMSLAFLGFTGL.

Belongs to the NqrDE/RnfAE family. As to quaternary structure, the complex is composed of six subunits: RnfA, RnfB, RnfC, RnfD, RnfE and RnfG.

The protein localises to the cell inner membrane. Its function is as follows. Part of a membrane-bound complex that couples electron transfer with translocation of ions across the membrane. In Tolumonas auensis (strain DSM 9187 / NBRC 110442 / TA 4), this protein is Ion-translocating oxidoreductase complex subunit A.